A 217-amino-acid chain; its full sequence is 3,4-dihydroxy-2-butanone 4-phosphate synthase (217 aa).

D-ribulose 5-phosphate-binding positions include 37–38, D42, 150–154, and E174; these read RE and RRGHT. Residue E38 participates in Mg(2+) binding. H153 provides a ligand contact to Mg(2+).

Belongs to the DHBP synthase family. Homodimer. Mg(2+) is required as a cofactor. It depends on Mn(2+) as a cofactor.

It catalyses the reaction D-ribulose 5-phosphate = (2S)-2-hydroxy-3-oxobutyl phosphate + formate + H(+). The protein operates within cofactor biosynthesis; riboflavin biosynthesis; 2-hydroxy-3-oxobutyl phosphate from D-ribulose 5-phosphate: step 1/1. Catalyzes the conversion of D-ribulose 5-phosphate to formate and 3,4-dihydroxy-2-butanone 4-phosphate. The sequence is that of 3,4-dihydroxy-2-butanone 4-phosphate synthase from Shewanella loihica (strain ATCC BAA-1088 / PV-4).